Consider the following 398-residue polypeptide: Tear acid lipase-like protein (398 aa).

A signal peptide spans 1-19; it reads MSWLLSTMCLVHVCGNIFC. Catalysis depends on serine 170, which acts as the Nucleophile. A disulfide bond links cysteine 243 and cysteine 252. Asparagine 268 carries N-linked (GlcNAc...) asparagine glycosylation. Catalysis depends on charge relay system residues aspartate 340 and histidine 369.

It belongs to the AB hydrolase superfamily. Lipase family. Monomer. Post-translationally, N-glycosylated. As to expression, expressed in female lacrimal gland acinar cells from where it is secreted into tears (at protein level).

It is found in the secreted. Functionally, female-specific protein which lacks detectable lipase activity against a range of substrates. Binds the hydrophobic lipid 1-aminoanthracene with high affinity. This Mesocricetus auratus (Golden hamster) protein is Tear acid lipase-like protein.